The sequence spans 423 residues: Gamma-glutamyl phosphate reductase (423 aa).

Belongs to the gamma-glutamyl phosphate reductase family.

The protein resides in the cytoplasm. The enzyme catalyses L-glutamate 5-semialdehyde + phosphate + NADP(+) = L-glutamyl 5-phosphate + NADPH + H(+). Its pathway is amino-acid biosynthesis; L-proline biosynthesis; L-glutamate 5-semialdehyde from L-glutamate: step 2/2. In terms of biological role, catalyzes the NADPH-dependent reduction of L-glutamate 5-phosphate into L-glutamate 5-semialdehyde and phosphate. The product spontaneously undergoes cyclization to form 1-pyrroline-5-carboxylate. The polypeptide is Gamma-glutamyl phosphate reductase (Burkholderia ambifaria (strain ATCC BAA-244 / DSM 16087 / CCUG 44356 / LMG 19182 / AMMD) (Burkholderia cepacia (strain AMMD))).